Consider the following 85-residue polypeptide: ELKEMLLKKYSGCLSRLRSEFLKKRKKGKLPKDARTVLLEWWNTHYRWPYPTEEDKVRLAAMTGLDPKQINNWFINQRKRHWKPS.

In terms of domain architecture, ELK spans 1–21 (ELKEMLLKKYSGCLSRLRSEF). A DNA-binding region (homeobox; TALE-type) is located at residues 22–85 (LKKRKKGKLP…NQRKRHWKPS (64 aa)).

This sequence belongs to the TALE/KNOX homeobox family.

The protein resides in the nucleus. In terms of biological role, probably binds to the DNA sequence 5'-TGAC-3'. The polypeptide is Homeobox protein liguleless 3 (LG3) (Zea mays (Maize)).